We begin with the raw amino-acid sequence, 471 residues long: Ribulose bisphosphate carboxylase large chain (471 aa).

Substrate contacts are provided by N115 and T165. Catalysis depends on K167, which acts as the Proton acceptor. Residue K169 participates in substrate binding. 3 residues coordinate Mg(2+): K193, D195, and E196. Residue K193 is modified to N6-carboxylysine. H286 (proton acceptor) is an active-site residue. Residues R287, H319, and S371 each contribute to the substrate site.

The protein belongs to the RuBisCO large chain family. Type I subfamily. As to quaternary structure, heterohexadecamer of 8 large chains and 8 small chains. Forms a CsoS2-CsoS1-RuBisCO complex. The cofactor is Mg(2+).

It is found in the carboxysome. The enzyme catalyses 2 (2R)-3-phosphoglycerate + 2 H(+) = D-ribulose 1,5-bisphosphate + CO2 + H2O. It carries out the reaction D-ribulose 1,5-bisphosphate + O2 = 2-phosphoglycolate + (2R)-3-phosphoglycerate + 2 H(+). Functionally, ruBisCO catalyzes two reactions: the carboxylation of D-ribulose 1,5-bisphosphate, the primary event in carbon dioxide fixation, as well as the oxidative fragmentation of the pentose substrate in the photorespiration process. Both reactions occur simultaneously and in competition at the same active site. The sequence is that of Ribulose bisphosphate carboxylase large chain from Parasynechococcus marenigrum (strain WH8102).